Reading from the N-terminus, the 995-residue chain is Endosome/lysosome-associated apoptosis and autophagy regulator family member 2 (995 aa).

An N-terminal signal peptide occupies residues 1 to 21 (MGVFCWSGCLVISLQLLLGAA). Residues 22 to 895 (LDNLSTCKEE…ACESIDFWLK (874 aa)) are Extracellular-facing. N-linked (GlcNAc...) asparagine glycans are attached at residues Asn24, Asn136, Asn245, Asn372, Asn527, Asn649, Asn683, Asn700, and Asn758. The MRH domain maps to 639–843 (SECLVTYTNE…LWETAEACPL (205 aa)). 2 cysteine pairs are disulfide-bonded: Cys641-Cys687 and Cys697-Cys725. 2 disulfide bridges follow: Cys793–Cys829 and Cys805–Cys841. An N-linked (GlcNAc...) asparagine glycan is attached at Asn883. The chain crosses the membrane as a helical span at residues 896-916 (VGAGVGAFTAVLLIALTCYFW). At 917–995 (KKNQKLEYKY…QLKSSRAQNI (79 aa)) the chain is on the cytoplasmic side.

This sequence belongs to the ELAPOR family. As to expression, expressed in the animal half of the embryo during gastrulation, becoming restricted to the ventral ectoderm at stage 12.5. At the neurula stage, expressed in the anterior ectoderm surrounding the neural plate, and weakly in the epidermis. Expression is especially high in the presumptive hatching gland and cement gland regions. Surprisingly, by the tailbud stage (stage 22), expression is limited to the hatching gland and is not seen in the cement gland. Conversely, in tadpoles expressed broadly in the head, heart and fin. Expression in the head is seen in the primary mouth and in the brain, eyes, otic vesicles and olfactory pits.

The protein localises to the cell membrane. In terms of biological role, functions as a regulator of the BMP signaling pathway and is involved in epidermal differentiation. This is Endosome/lysosome-associated apoptosis and autophagy regulator family member 2 (elapor2) from Xenopus laevis (African clawed frog).